Consider the following 364-residue polypeptide: MSILNLVRADLLNSKNYVPGGESARYRSHANELPWSPVTMGEHNLNYYPNIGLQIELQKQLAKRYQIYSDQIILTRGSDDGIDLTTRLFLTAGKDAFMQFPPTFPMYAFYVRLQQAELIECPLDRRTNFRLTLDQIENSWKPNCKIIMFCSPNNPTGNLVDLNLIAKTCELYANQSIIVVDEAYIEFANAPSATSLIGEFENLIVLRTLSKAFGLAGLRLGCIIAQSPIIQAFNKIIAPYSIATPSMELAKRALNNSDWFTKTIEQIKSSRAWVIKKFADNPIIEKIYPTETNFILIQTRFSKQLTTWLAHYGIAVRDFPSSSLLHDHLRITVGHDEQNQLLINTLSSFNADVAGLNYEKDFIY.

N6-(pyridoxal phosphate)lysine is present on K211.

This sequence belongs to the class-II pyridoxal-phosphate-dependent aminotransferase family. Histidinol-phosphate aminotransferase subfamily. In terms of assembly, homodimer. Requires pyridoxal 5'-phosphate as cofactor.

The enzyme catalyses L-histidinol phosphate + 2-oxoglutarate = 3-(imidazol-4-yl)-2-oxopropyl phosphate + L-glutamate. It functions in the pathway amino-acid biosynthesis; L-histidine biosynthesis; L-histidine from 5-phospho-alpha-D-ribose 1-diphosphate: step 7/9. The protein is Histidinol-phosphate aminotransferase 1 of Legionella pneumophila subsp. pneumophila (strain Philadelphia 1 / ATCC 33152 / DSM 7513).